We begin with the raw amino-acid sequence, 405 residues long: MAKEKFERTKEHVNVGTIGHVDHGKSTLTSAITCVLAAGLVEGGKAKCFKYEEIDKAPEEKERGITINITHVEYETAKRHYAHVDCPGHADYIKNMITGAAQMDGAILVVSAADGPMPQTREHVLLARQVNVPYIVVFMNKCDMVDDEELLELVELEVRELLSKYEYPGDEVPVIRGSALGALQELEQNSPGKWVESIKELLNAMDEYIPTPQREVDKPFLMPIEDVFSISGRGTVVTGRVERGVLRPGDEVEIVGLREEPLKTVATSIEMFRKVLDEALPGDNIGVLLRGVGKDDVERGQVLAQPGSVKAHKRFRAQVYVLSKEEGGRHTPFFVNYRPQFYFRTADVTGTVVKLPEGVEMVMPGDNVELEVELIAPVALEEGLRFAIREGGRTVGAGVVTKILD.

The region spanning 10–213 is the tr-type G domain; sequence KEHVNVGTIG…AMDEYIPTPQ (204 aa). The tract at residues 19–26 is G1; the sequence is GHVDHGKS. 19 to 26 lines the GTP pocket; sequence GHVDHGKS. Position 26 (Ser-26) interacts with Mg(2+). The segment at 64–68 is G2; that stretch reads GITIN. The G3 stretch occupies residues 85 to 88; the sequence is DCPG. Residues 85–89 and 140–143 contribute to the GTP site; these read DCPGH and NKCD. The segment at 140–143 is G4; the sequence is NKCD. The segment at 178–180 is G5; sequence SAL.

Belongs to the TRAFAC class translation factor GTPase superfamily. Classic translation factor GTPase family. EF-Tu/EF-1A subfamily. As to quaternary structure, monomer.

It localises to the cytoplasm. It carries out the reaction GTP + H2O = GDP + phosphate + H(+). Its function is as follows. GTP hydrolase that promotes the GTP-dependent binding of aminoacyl-tRNA to the A-site of ribosomes during protein biosynthesis. This chain is Elongation factor Tu, found in Aquifex aeolicus (strain VF5).